Here is a 384-residue protein sequence, read N- to C-terminus: Sodium channel protein Nach (384 aa).

Over 1–319 the chain is Extracellular; sequence AAFAYFSGFM…LVSHLGSAFS (319 aa). 2 N-linked (GlcNAc...) asparagine glycosylation sites follow: asparagine 32 and asparagine 215. Residues 320 to 340 form a helical membrane-spanning segment; the sequence is LFVGMSMLSLVEIIYYFTVIL. Over 341–384 the chain is Cytoplasmic; that stretch reads RRNYVQECRARQKLQTLHRRPNFGWPGDKNSNQQKSVFYIRGRN.

It belongs to the amiloride-sensitive sodium channel (TC 1.A.6) family.

It localises to the membrane. In terms of biological role, part of a complex that plays a role in tracheal liquid clearance. Probable role in sodium transport. This chain is Sodium channel protein Nach (Nach), found in Drosophila virilis (Fruit fly).